A 306-amino-acid chain; its full sequence is SPbeta prophage-derived uncharacterized protein YonG (306 aa).

The sequence is that of SPbeta prophage-derived uncharacterized protein YonG (yonG) from Bacillus subtilis (strain 168).